The sequence spans 111 residues: uncharacterized protein (111 aa).

Helical transmembrane passes span 7–27 (ILNI…SMMI) and 53–73 (AFAM…TFLH).

Its subcellular location is the cell membrane. This is an uncharacterized protein from Bacillus anthracis.